The chain runs to 143 residues: Small ribosomal subunit protein eS19y (143 aa).

The protein belongs to the eukaryotic ribosomal protein eS19 family.

The sequence is that of Small ribosomal subunit protein eS19y (RPS19B) from Arabidopsis thaliana (Mouse-ear cress).